The chain runs to 446 residues: MKVVLPDGRIPRRWYNILPDLPEPLAPPLDPETNEPVDPKKLERIFAKELVKQEMSTKRYIKIPEEVRKMYSKIGRPTPLFRATNLEKYLNTPARIYFKFEGATVTGSHKINTALAQAYYAKKEGIERLVTETGAGQWGTALSLAGALMGIKVRVYMARASYEQKPYRKVLMRIYGAEVFPSPSENTEIGKRFLSENPNHPGSLGIAISEAIEDVLKDEKARYSLGSVLNHVLMHQTVIGLEAKQQMEEFEEPDVIIGCVGGGSNFAGLAYPFVKEVLDGDNEYEFIAVEPKAAPSMTRGVYTYDFGDSGELTPKLKMHTLGHRYHVPPIHAGGLRYHGVAPTLSVLVNNGIVKPIAYHQTEVFEAAALFAKLEGIVPAPESAHAIKATIDKAIEAKREGKEIVILFNLSGHGLLDLHGYEEYLEGRLQDYEPKDLPISNPLNPKP.

Residue Lys110 is modified to N6-(pyridoxal phosphate)lysine.

The protein belongs to the TrpB family. As to quaternary structure, tetramer of two alpha and two beta chains. The cofactor is pyridoxal 5'-phosphate.

The catalysed reaction is (1S,2R)-1-C-(indol-3-yl)glycerol 3-phosphate + L-serine = D-glyceraldehyde 3-phosphate + L-tryptophan + H2O. Its pathway is amino-acid biosynthesis; L-tryptophan biosynthesis; L-tryptophan from chorismate: step 5/5. Functionally, the beta subunit is responsible for the synthesis of L-tryptophan from indole and L-serine. The protein is Tryptophan synthase beta chain 2 (trpB2) of Pyrococcus furiosus (strain ATCC 43587 / DSM 3638 / JCM 8422 / Vc1).